Consider the following 302-residue polypeptide: Nucleotide-binding protein SE_0548 (302 aa).

Glycine 18–serine 25 lines the ATP pocket. Aspartate 69–glycine 72 lines the GTP pocket.

The protein belongs to the RapZ-like family.

Its function is as follows. Displays ATPase and GTPase activities. The sequence is that of Nucleotide-binding protein SE_0548 from Staphylococcus epidermidis (strain ATCC 12228 / FDA PCI 1200).